Here is a 340-residue protein sequence, read N- to C-terminus: Methionine import ATP-binding protein MetN 1 (340 aa).

Residues 2 to 242 (IRLENVSVDF…PQHAYTKQLV (241 aa)) form the ABC transporter domain. Residue 39–46 (GTSGAGKS) participates in ATP binding.

This sequence belongs to the ABC transporter superfamily. Methionine importer (TC 3.A.1.24) family. The complex is composed of two ATP-binding proteins (MetN), two transmembrane proteins (MetI) and a solute-binding protein (MetQ).

It localises to the cell inner membrane. It catalyses the reaction L-methionine(out) + ATP + H2O = L-methionine(in) + ADP + phosphate + H(+). It carries out the reaction D-methionine(out) + ATP + H2O = D-methionine(in) + ADP + phosphate + H(+). Functionally, part of the ABC transporter complex MetNIQ involved in methionine import. Responsible for energy coupling to the transport system. This chain is Methionine import ATP-binding protein MetN 1, found in Pectobacterium atrosepticum (strain SCRI 1043 / ATCC BAA-672) (Erwinia carotovora subsp. atroseptica).